A 141-amino-acid chain; its full sequence is Nucleoside diphosphate kinase (141 aa).

6 residues coordinate ATP: Lys-11, Phe-59, Arg-87, Thr-93, Arg-104, and Asn-114. Catalysis depends on His-117, which acts as the Pros-phosphohistidine intermediate.

It belongs to the NDK family. Homotetramer. Requires Mg(2+) as cofactor.

It localises to the cytoplasm. It catalyses the reaction a 2'-deoxyribonucleoside 5'-diphosphate + ATP = a 2'-deoxyribonucleoside 5'-triphosphate + ADP. The enzyme catalyses a ribonucleoside 5'-diphosphate + ATP = a ribonucleoside 5'-triphosphate + ADP. In terms of biological role, major role in the synthesis of nucleoside triphosphates other than ATP. The ATP gamma phosphate is transferred to the NDP beta phosphate via a ping-pong mechanism, using a phosphorylated active-site intermediate. This is Nucleoside diphosphate kinase from Neisseria gonorrhoeae (strain NCCP11945).